The primary structure comprises 238 residues: MTSREDLVYLSKLAEQSERYEEMVQYMKQVAEMGTELSVEERNLISVAYKNVVGSRRASWRIISSLEQKEQAKGNTQRVELIKTYRAKIEQELSQKCDDVLKIITEFLLKNSTSIESKVFFKKMEGDYYRYYAEFTVDEKRKEVADKSLAAYQEATDTAASLVPTHPIRLGLALNFSVFYYEIMNDADKACQLAKEAFDEAIQKLDEVPEESYKDSTLIMQLLRDNLTLWTSDMGDDE.

This sequence belongs to the 14-3-3 family.

In terms of biological role, probable adapter protein. The chain is 14-3-3 protein 2 from Entamoeba histolytica (strain ATCC 30459 / HM-1:IMSS / ABRM).